The following is a 91-amino-acid chain: N.vectensis toxin 8 (91 aa).

Residues 1–26 (MNSLLKVAVVCLVMLVACFVPRVILT) form the signal peptide. Cystine bridges form between Cys-45–Cys-76, Cys-47–Cys-67, and Cys-60–Cys-77.

In terms of tissue distribution, expressed in ectodermal gland cells.

Has toxic effects on zebrafish larvae. It causes contractile paralysis and twitching of the tail within 20 minutes, followed by death within 30 minutes. Does not show any toxicity when injected into arthropods (cherry shrimps or grass shrimps). The protein is N.vectensis toxin 8 of Nematostella vectensis (Starlet sea anemone).